Consider the following 93-residue polypeptide: Long neurotoxin 1 (93 aa).

The signal sequence occupies residues 1–21 (MKTLLLTLVVVTIVCLDLGNS). 5 disulfide bridges follow: cysteine 24-cysteine 42, cysteine 35-cysteine 63, cysteine 48-cysteine 52, cysteine 67-cysteine 78, and cysteine 79-cysteine 84.

It belongs to the three-finger toxin family. Long-chain subfamily. Type II alpha-neurotoxin sub-subfamily. In terms of tissue distribution, expressed by the venom gland.

The protein resides in the secreted. Binds with high affinity to muscular (alpha-1/CHRNA1) and neuronal (alpha-7/CHRNA7) nicotinic acetylcholine receptor (nAChR) and inhibits acetylcholine from binding to the receptor, thereby impairing neuromuscular and neuronal transmission. The sequence is that of Long neurotoxin 1 from Tropidechis carinatus (Australian rough-scaled snake).